Reading from the N-terminus, the 392-residue chain is Phosphopentomutase (392 aa).

Asp14, Asp286, His291, Asp327, His328, and His339 together coordinate Mn(2+).

It belongs to the phosphopentomutase family. Requires Mn(2+) as cofactor.

The protein resides in the cytoplasm. The catalysed reaction is 2-deoxy-alpha-D-ribose 1-phosphate = 2-deoxy-D-ribose 5-phosphate. It carries out the reaction alpha-D-ribose 1-phosphate = D-ribose 5-phosphate. The protein operates within carbohydrate degradation; 2-deoxy-D-ribose 1-phosphate degradation; D-glyceraldehyde 3-phosphate and acetaldehyde from 2-deoxy-alpha-D-ribose 1-phosphate: step 1/2. In terms of biological role, isomerase that catalyzes the conversion of deoxy-ribose 1-phosphate (dRib-1-P) and ribose 1-phosphate (Rib-1-P) to deoxy-ribose 5-phosphate (dRib-5-P) and ribose 5-phosphate (Rib-5-P), respectively. In Staphylococcus aureus (strain Mu3 / ATCC 700698), this protein is Phosphopentomutase.